The following is a 520-amino-acid chain: MSLSPCRAQRGFSARSACSARSRGRSRGGFSSRGGFSSRSLNSFGGCLEGSRGSTWGSGGRLGVRFGEWSGGPGLSLCPPGGIQEVTINQNLLTPLKIEIDPQFQVVRTQETQEIRTLNNQFASFIDKVRFLEQQNKVLETKWHLLQQQGLSGSQQGLEPVFEACLDQLRKQLEQLQGERGALDAELKACRDQEEEYKSKYEEEAHRRATLENDFVVLKKDVDGVFLSKMELEGKLEALREYLYFLKHLNEEELGQLQTQASDTSVVLSMDNNRYLDFSSIITEVRARYEEIARSSKAEAEALYQTKYQELQVSAQLHGDRMQETKVQISQLHQEIQRLQSQTENLKKQNASLQAAITDAEQRGELALKDAQAKVDELEAALRMAKQNLARLLCEYQELTSTKLSLDVEIATYRRLLEGEECRMSGECTSQVTISSVGGSAVMSGGVGGGLGSTCGLGSGKGSPGSCCTSIVTGGSNIILGSGKDPVLDSCSVSGSSAGSSCHTILKKTVESSLKTSITY.

Residues 1 to 110 (MSLSPCRAQR…DPQFQVVRTQ (110 aa)) form a head region. Residues 111 to 146 (ETQEIRTLNNQFASFIDKVRFLEQQNKVLETKWHLL) are coil 1A. An IF rod domain is found at 111–424 (ETQEIRTLNN…RLLEGEECRM (314 aa)). Residues 147 to 165 (QQQGLSGSQQGLEPVFEAC) are linker 1. A coil 1B region spans residues 166-258 (LDQLRKQLEQ…LNEEELGQLQ (93 aa)). The interval 259–281 (TQASDTSVVLSMDNNRYLDFSSI) is linker 12. Residues 282 to 421 (ITEVRARYEE…TYRRLLEGEE (140 aa)) form a coil 2 region. The interval 422-520 (CRMSGECTSQ…ESSLKTSITY (99 aa)) is tail.

This sequence belongs to the intermediate filament family. As to quaternary structure, heterotetramer of two type I and two type II keratins. In terms of tissue distribution, in non-keratinising esophageal and vaginal epithelium, strongly expressed in the basal and parabasal/lower suprabasal cell layers with considerably decreased expression in the mid/upper suprabasal layers (at protein level). A similar gradient from basal to lower suprabasal layers is seen in the partially keratinised dorsal tongue epithelium, in the scalp and in the plantar epidermis (at protein level). Extension of expression into the suprabasal compartments is distinctly more pronounced in non-keratinising epithelia than in keratinising epithelia and epidermis (at protein level). In scalp sections, present in the interfollicular epidermis and infundibulum including the entire outer root sheath of the hair follicles and also in the sebocytes (at protein level). In sweat glands, expressed in peripheral and luminal cells of the lower duct and in peripheral cells of the middle/upper duct with no expression observed in luminal cells (at protein level). In embryos at the 14th week of pregnancy, detected in basal and parabasal layers but is absent from the uppermost epidermal layer (at protein level). Expressed in tongue epithelium.

This chain is Keratin, type II cytoskeletal 78 (KRT78), found in Homo sapiens (Human).